Reading from the N-terminus, the 425-residue chain is Serine--tRNA ligase (425 aa).

229 to 231 (TAE) lines the L-serine pocket. 260-262 (RSE) contributes to the ATP binding site. Glutamate 283 provides a ligand contact to L-serine. 347–350 (EISS) lines the ATP pocket. Serine 384 provides a ligand contact to L-serine.

The protein belongs to the class-II aminoacyl-tRNA synthetase family. Type-1 seryl-tRNA synthetase subfamily. As to quaternary structure, homodimer. The tRNA molecule binds across the dimer.

It is found in the cytoplasm. It carries out the reaction tRNA(Ser) + L-serine + ATP = L-seryl-tRNA(Ser) + AMP + diphosphate + H(+). The enzyme catalyses tRNA(Sec) + L-serine + ATP = L-seryl-tRNA(Sec) + AMP + diphosphate + H(+). Its pathway is aminoacyl-tRNA biosynthesis; selenocysteinyl-tRNA(Sec) biosynthesis; L-seryl-tRNA(Sec) from L-serine and tRNA(Sec): step 1/1. Catalyzes the attachment of serine to tRNA(Ser). Is also able to aminoacylate tRNA(Sec) with serine, to form the misacylated tRNA L-seryl-tRNA(Sec), which will be further converted into selenocysteinyl-tRNA(Sec). This chain is Serine--tRNA ligase, found in Rhizorhabdus wittichii (strain DSM 6014 / CCUG 31198 / JCM 15750 / NBRC 105917 / EY 4224 / RW1) (Sphingomonas wittichii).